A 325-amino-acid polypeptide reads, in one-letter code: Sulfite dehydrogenase subunit C (325 aa).

8 helical membrane passes run 5-25, 43-63, 87-107, 126-146, 165-185, 186-206, 266-286, and 290-310; these read FSVI…LAMV, FYAV…GASF, EVIV…AHWF, LLLG…TAMI, FLFL…AYIG, NPLV…GLAS, VYLV…YLIG, and LPII…WSFF.

Belongs to the DmsC family. Forms a heterotrimeric membrane-bound complex composed of a catalytic heterodimer (SoeAB) and a membrane anchor protein (SoeC).

Its subcellular location is the cell inner membrane. Part of the SoeABC complex that catalyzes the oxidation of sulfite to sulfate. SoeC probably anchors and stabilizes the catalytic subunits. The protein is Sulfite dehydrogenase subunit C of Allochromatium vinosum (strain ATCC 17899 / DSM 180 / NBRC 103801 / NCIMB 10441 / D) (Chromatium vinosum).